Reading from the N-terminus, the 753-residue chain is 5-methyltetrahydropteroyltriglutamate--homocysteine methyltransferase (753 aa).

Residues 17–20 (RELK) and Lys-117 each bind 5-methyltetrahydropteroyltri-L-glutamate. L-homocysteine is bound by residues 431–433 (IGS) and Glu-484. L-methionine contacts are provided by residues 431–433 (IGS) and Glu-484. 5-methyltetrahydropteroyltri-L-glutamate-binding positions include 515–516 (RC) and Trp-561. Residue Asp-599 coordinates L-homocysteine. Asp-599 is an L-methionine binding site. Glu-605 lines the 5-methyltetrahydropteroyltri-L-glutamate pocket. Residues His-641, Cys-643, and Glu-665 each coordinate Zn(2+). The active-site Proton donor is His-694. Residue Cys-726 coordinates Zn(2+).

Belongs to the vitamin-B12 independent methionine synthase family. Zn(2+) serves as cofactor.

It carries out the reaction 5-methyltetrahydropteroyltri-L-glutamate + L-homocysteine = tetrahydropteroyltri-L-glutamate + L-methionine. It participates in amino-acid biosynthesis; L-methionine biosynthesis via de novo pathway; L-methionine from L-homocysteine (MetE route): step 1/1. Its function is as follows. Catalyzes the transfer of a methyl group from 5-methyltetrahydrofolate to homocysteine resulting in methionine formation. This Citrobacter koseri (strain ATCC BAA-895 / CDC 4225-83 / SGSC4696) protein is 5-methyltetrahydropteroyltriglutamate--homocysteine methyltransferase.